The primary structure comprises 383 residues: L-lactate dehydrogenase (383 aa).

Residues 1 to 380 (MIISSTFDYR…THESLASTDA (380 aa)) enclose the FMN hydroxy acid dehydrogenase domain. Residue Y24 coordinates substrate. FMN is bound by residues S106 and Q127. Position 129 (Y129) interacts with substrate. FMN is bound at residue T155. R164 is a binding site for substrate. K251 is a binding site for FMN. H275 acts as the Proton acceptor in catalysis. R278 is a substrate binding site. 306–330 (DSGVRSGLDVVRMIAQGADAVMIGR) is an FMN binding site.

This sequence belongs to the FMN-dependent alpha-hydroxy acid dehydrogenase family. FMN serves as cofactor.

Its subcellular location is the cell inner membrane. It catalyses the reaction (S)-lactate + A = pyruvate + AH2. Catalyzes the conversion of L-lactate to pyruvate. Is coupled to the respiratory chain. The sequence is that of L-lactate dehydrogenase from Bartonella quintana (strain Toulouse) (Rochalimaea quintana).